Reading from the N-terminus, the 471-residue chain is Coronin-6 (471 aa).

5 WD repeats span residues 79 to 119 (GHTG…PVRN), 129 to 169 (GHSK…VLLS), 173 to 212 (IHPD…VVAE), 216 to 259 (PHEG…EPVA), and 264 to 304 (DTSN…PFVH). The tract at residues 410–433 (ILDVRPPASPRRSQSASEAPLSQH) is disordered. Low complexity predominate over residues 419 to 429 (PRRSQSASEAP). The stretch at 426–468 (SEAPLSQHTLETLLEEIKALRDRVQAQEERITALENMLCELVD) forms a coiled coil.

The sequence is that of Coronin-6 (Coro6) from Mus musculus (Mouse).